Consider the following 217-residue polypeptide: Adenylate kinase (217 aa).

Residue 11–16 (GAGKGT) coordinates ATP. An NMP region spans residues 31-60 (STGDMFREAMANETPVGLEAKSYIDKGDLV). Residues T32, R37, 58–60 (DLV), 86–89 (GFPR), and Q93 each bind AMP. The segment at 127 to 165 (ARYICKNCGATYNKISNPTKVEGTCDRCGGHEFFQREDD) is LID. Position 128 (R128) interacts with ATP. Residues C131 and C134 each contribute to the Zn(2+) site. 137 to 138 (TY) contributes to the ATP binding site. 2 residues coordinate Zn(2+): C151 and C154. Residues R162 and R173 each coordinate AMP. ATP is bound at residue Q201.

Belongs to the adenylate kinase family. As to quaternary structure, monomer.

It is found in the cytoplasm. The enzyme catalyses AMP + ATP = 2 ADP. It functions in the pathway purine metabolism; AMP biosynthesis via salvage pathway; AMP from ADP: step 1/1. In terms of biological role, catalyzes the reversible transfer of the terminal phosphate group between ATP and AMP. Plays an important role in cellular energy homeostasis and in adenine nucleotide metabolism. In Lactobacillus gasseri (strain ATCC 33323 / DSM 20243 / BCRC 14619 / CIP 102991 / JCM 1131 / KCTC 3163 / NCIMB 11718 / NCTC 13722 / AM63), this protein is Adenylate kinase.